Reading from the N-terminus, the 285-residue chain is RNA polymerase sigma factor RpoH (285 aa).

Positions 53–122 (LILSHLRFVA…IHEYVLRNWR (70 aa)) are sigma-70 factor domain-2. The Interaction with polymerase core subunit RpoC motif lies at 77–80 (DLIQ). Residues 229–281 (ALEGLDERSQHIIRARWLDDDNKSTLQELADQYGVSAERVRQLEKNAMKKLKM) are sigma-70 factor domain-4. A DNA-binding region (H-T-H motif) is located at residues 254-273 (LQELADQYGVSAERVRQLEK).

It belongs to the sigma-70 factor family. RpoH subfamily. As to quaternary structure, interacts with the RNA polymerase core enzyme.

Its subcellular location is the cytoplasm. Sigma factors are initiation factors that promote the attachment of RNA polymerase to specific initiation sites and are then released. This sigma factor is involved in regulation of expression of heat shock genes. The protein is RNA polymerase sigma factor RpoH of Serratia marcescens.